The following is a 251-amino-acid chain: Triosephosphate isomerase (251 aa).

Asn-10 and Lys-12 together coordinate substrate. The Electrophile role is filled by His-96. Glu-168 functions as the Proton acceptor in the catalytic mechanism.

This sequence belongs to the triosephosphate isomerase family. Homodimer.

It carries out the reaction D-glyceraldehyde 3-phosphate = dihydroxyacetone phosphate. The protein operates within carbohydrate biosynthesis; gluconeogenesis. It participates in carbohydrate degradation; glycolysis; D-glyceraldehyde 3-phosphate from glycerone phosphate: step 1/1. The polypeptide is Triosephosphate isomerase (tpiA) (Aspergillus oryzae (strain ATCC 42149 / RIB 40) (Yellow koji mold)).